A 289-amino-acid polypeptide reads, in one-letter code: RNA exonuclease 4 (289 aa).

Polar residues predominate over residues 1 to 24 (MALSSNWQALLASESNPTSNGKNK). Residues 1–34 (MALSSNWQALLASESNPTSNGKNKQSNRKIRNVK) are disordered. Residues 25–34 (QSNRKIRNVK) are compositionally biased toward basic residues. The 153-residue stretch at 121-273 (YIAMDCEFVG…EDARATMLLY (153 aa)) folds into the Exonuclease domain.

Belongs to the REXO4 family.

Its subcellular location is the nucleus. Its function is as follows. Exoribonuclease involved in ribosome biosynthesis. Involved in the processing of ITS1, the internal transcribed spacer localized between the 18S and 5.8S rRNAs. The chain is RNA exonuclease 4 (REX4) from Saccharomyces cerevisiae (strain ATCC 204508 / S288c) (Baker's yeast).